The sequence spans 301 residues: Tyrosine recombinase XerD (301 aa).

The Core-binding (CB) domain occupies Pro6 to Lys89. The Tyr recombinase domain occupies Arg108–His293. Active-site residues include Arg152, Lys174, His245, Arg248, and His271. Residue Tyr280 is the O-(3'-phospho-DNA)-tyrosine intermediate of the active site.

It belongs to the 'phage' integrase family. XerD subfamily. As to quaternary structure, forms a cyclic heterotetrameric complex composed of two molecules of XerC and two molecules of XerD.

The protein localises to the cytoplasm. In terms of biological role, site-specific tyrosine recombinase, which acts by catalyzing the cutting and rejoining of the recombining DNA molecules. The XerC-XerD complex is essential to convert dimers of the bacterial chromosome into monomers to permit their segregation at cell division. It also contributes to the segregational stability of plasmids. This Chlamydia muridarum (strain MoPn / Nigg) protein is Tyrosine recombinase XerD.